The chain runs to 381 residues: Homoserine O-succinyltransferase (381 aa).

The AB hydrolase-1 domain occupies 45 to 360; the sequence is NAVLVCHALN…PHGHDAFLLD (316 aa). The active-site Nucleophile is the serine 151. Position 221 (arginine 221) interacts with substrate. Residues aspartate 321 and histidine 354 contribute to the active site. Aspartate 355 serves as a coordination point for substrate.

Belongs to the AB hydrolase superfamily. MetX family. Homodimer.

The protein resides in the cytoplasm. The catalysed reaction is L-homoserine + succinyl-CoA = O-succinyl-L-homoserine + CoA. It functions in the pathway amino-acid biosynthesis; L-methionine biosynthesis via de novo pathway; O-succinyl-L-homoserine from L-homoserine: step 1/1. Its function is as follows. Transfers a succinyl group from succinyl-CoA to L-homoserine, forming succinyl-L-homoserine. The sequence is that of Homoserine O-succinyltransferase from Burkholderia cenocepacia (strain ATCC BAA-245 / DSM 16553 / LMG 16656 / NCTC 13227 / J2315 / CF5610) (Burkholderia cepacia (strain J2315)).